We begin with the raw amino-acid sequence, 63 residues long: Lysis protein (63 aa).

The helical transmembrane segment at Leu-21–Trp-43 threads the bilayer.

This sequence belongs to the Leviviricetes lysis protein family.

The protein localises to the host cell inner membrane. The protein resides in the host cell outer membrane. Induces the formation of specific membrane adhesion sites between the inner and outer membranes, apparently leading to host cell lysis. Lysis may be performed via activation of host murein hydrolases. This chain is Lysis protein, found in Escherichia coli (Bacteriophage GA).